The chain runs to 328 residues: Glycerol-3-phosphate dehydrogenase [NAD(P)+] (328 aa).

NADPH is bound by residues Trp-15, His-35, Tyr-51, and Lys-107. Sn-glycerol 3-phosphate-binding residues include Lys-107, Gly-135, and Ser-137. Residue Ala-139 coordinates NADPH. Positions 190, 243, 253, 254, and 255 each coordinate sn-glycerol 3-phosphate. Lys-190 functions as the Proton acceptor in the catalytic mechanism. Residue Arg-254 coordinates NADPH. NADPH is bound by residues Leu-276 and Glu-278.

This sequence belongs to the NAD-dependent glycerol-3-phosphate dehydrogenase family.

Its subcellular location is the cytoplasm. It catalyses the reaction sn-glycerol 3-phosphate + NAD(+) = dihydroxyacetone phosphate + NADH + H(+). It carries out the reaction sn-glycerol 3-phosphate + NADP(+) = dihydroxyacetone phosphate + NADPH + H(+). It functions in the pathway membrane lipid metabolism; glycerophospholipid metabolism. Its function is as follows. Catalyzes the reduction of the glycolytic intermediate dihydroxyacetone phosphate (DHAP) to sn-glycerol 3-phosphate (G3P), the key precursor for phospholipid synthesis. The polypeptide is Glycerol-3-phosphate dehydrogenase [NAD(P)+] (Rhodopseudomonas palustris (strain BisA53)).